We begin with the raw amino-acid sequence, 107 residues long: N(4)-acetylcytidine amidohydrolase (107 aa).

Positions 6–102 (TFYRRFQADI…RLYVISFSLV (97 aa)) constitute an ASCH domain. The Proton acceptor role is filled by Lys20. Thr23 serves as the catalytic Nucleophile. Glu73 acts as the Proton donor in catalysis.

It belongs to the N(4)-acetylcytidine amidohydrolase family.

It carries out the reaction N(4)-acetylcytidine + H2O = cytidine + acetate + H(+). It catalyses the reaction N(4)-acetyl-2'-deoxycytidine + H2O = 2'-deoxycytidine + acetate + H(+). The enzyme catalyses N(4)-acetylcytosine + H2O = cytosine + acetate + H(+). In terms of biological role, catalyzes the hydrolysis of N(4)-acetylcytidine (ac4C). This Edwardsiella ictaluri (strain 93-146) protein is N(4)-acetylcytidine amidohydrolase.